We begin with the raw amino-acid sequence, 564 residues long: MSSHGNSLFLRESGQRLGRVGWLQRLQESLQQRALRTRLRLQTMTREHVLRFLRRNAFILLTVSAVVIGVSLAFALRPYQLTYRQIKYFSFPGELLMRMLQMLVLPLIVSSLVTGMASLDNKATGRMGMRAAVYYMVTTVIAVFIGILMVTIIHPGKGSKEGLHREGRIETIPTADAFMDLVRNMFPPNLVEACFKQFKTQYSTRLVTRTIVRTENGSELGTSMPPPSSMDNGTSLLENVTWALGTLQEVLSFEETVPVPGSANGINALGLVVFSVAFGLVIGGVKHKGRVLRDFFDSLNEAIMRMVGIIIWYAPVGILFLIAGKILEMEDMAVLGGQLGMYTLTVIVGLFLHAGGVLPLIYFLITHRNPFPFIGGVLQALITAMGTSSSSATLPITFRCLEEGLGVDRRITRFVLPVGATVNMDGTALYEALAAIFIAQVNNYELNLGQITTISITATAASVGAAGIPQAGLVTMVIVLTSVGLPTEDITLIIAVDWFLDRLRTMTNVLGDSIGAAVIEHLSQRELELQEAELTLPSLGKPYKPLMAQEKGASRGRGGNESAM.

Residues 1-55 (MSSHGNSLFLRESGQRLGRVGWLQRLQESLQQRALRTRLRLQTMTREHVLRFLRR) lie on the Cytoplasmic side of the membrane. Position 2 is a phosphoserine (Ser-2). 3 helical membrane passes run 56 to 76 (NAFI…AFAL), 99 to 119 (MLQM…MASL), and 133 to 153 (VYYM…VTII). Asn-216, Asn-232, and Asn-239 each carry an N-linked (GlcNAc...) asparagine glycan. The next 3 membrane-spanning stretches (helical) occupy residues 262-285 (SANG…IGGV), 295-322 (FFDS…LFLI), and 344-365 (LTVI…YFLI). Positions 371 to 401 (FPFIGGVLQALITAMGTSSSSATLPITFRCL) form an intramembrane region, discontinuously helical. 388-390 (SSS) lines the L-aspartate pocket. The helical transmembrane segment at 411-437 (ITRFVLPVGATVNMDGTALYEALAAIF) threads the bilayer. The Na(+) site is built by Gly-419, Thr-421, and Asn-423. L-aspartate is bound by residues Thr-427, 468-472 (IPQAG), Asp-501, and Asn-508. An intramembrane region (discontinuously helical) is located at residues 451 to 484 (ITTISITATAASVGAAGIPQAGLVTMVIVLTSVG). The helical transmembrane segment at 498-519 (WFLDRLRTMTNVLGDSIGAAVI) threads the bilayer. Positions 508 and 512 each coordinate Na(+).

Belongs to the dicarboxylate/amino acid:cation symporter (DAACS) (TC 2.A.23) family. SLC1A6 subfamily. Homotrimer. As to expression, detected in brain, cerebellum and hippocampus.

It localises to the cell membrane. The enzyme catalyses K(+)(in) + L-glutamate(out) + 3 Na(+)(out) + H(+)(out) = K(+)(out) + L-glutamate(in) + 3 Na(+)(in) + H(+)(in). The catalysed reaction is K(+)(in) + L-aspartate(out) + 3 Na(+)(out) + H(+)(out) = K(+)(out) + L-aspartate(in) + 3 Na(+)(in) + H(+)(in). It carries out the reaction D-aspartate(out) + K(+)(in) + 3 Na(+)(out) + H(+)(out) = D-aspartate(in) + K(+)(out) + 3 Na(+)(in) + H(+)(in). Its function is as follows. Sodium-dependent, high-affinity amino acid transporter that mediates the uptake of L-glutamate and also L-aspartate and D-aspartate. Functions as a symporter that transports one amino acid molecule together with two or three Na(+) ions and one proton, in parallel with the counter-transport of one K(+) ion. Mediates Cl(-) flux that is not coupled to amino acid transport; this avoids the accumulation of negative charges due to aspartate and Na(+) symport. Plays a redundant role in the rapid removal of released glutamate from the synaptic cleft, which is essential for terminating the postsynaptic action of glutamate. In Canis lupus familiaris (Dog), this protein is Excitatory amino acid transporter 4 (SLC1A6).